Reading from the N-terminus, the 141-residue chain is Hemoglobin subunit alpha (141 aa).

The 140-residue stretch at 2–141 (AFTACEKQTI…ICQELSSRYR (140 aa)) folds into the Globin domain. Residue histidine 59 coordinates O2. Histidine 88 is a binding site for heme b.

The protein belongs to the globin family. As to quaternary structure, heterotetramer of two alpha chains and two beta chains. Red blood cells.

In terms of biological role, involved in oxygen transport from gills to the various peripheral tissues. This chain is Hemoglobin subunit alpha (HBA), found in Mustelus griseus (Spotless smooth-hound).